We begin with the raw amino-acid sequence, 294 residues long: 4-hydroxy-tetrahydrodipicolinate synthase (294 aa).

Thr-45 lines the pyruvate pocket. Tyr-133 functions as the Proton donor/acceptor in the catalytic mechanism. The active-site Schiff-base intermediate with substrate is Lys-161. Ile-203 is a pyruvate binding site.

Belongs to the DapA family. Homotetramer; dimer of dimers.

It localises to the cytoplasm. It carries out the reaction L-aspartate 4-semialdehyde + pyruvate = (2S,4S)-4-hydroxy-2,3,4,5-tetrahydrodipicolinate + H2O + H(+). The protein operates within amino-acid biosynthesis; L-lysine biosynthesis via DAP pathway; (S)-tetrahydrodipicolinate from L-aspartate: step 3/4. Functionally, catalyzes the condensation of (S)-aspartate-beta-semialdehyde [(S)-ASA] and pyruvate to 4-hydroxy-tetrahydrodipicolinate (HTPA). The chain is 4-hydroxy-tetrahydrodipicolinate synthase from Shewanella pealeana (strain ATCC 700345 / ANG-SQ1).